The chain runs to 351 residues: dTDP-glucose 4,6-dehydratase (351 aa).

NAD(+) contacts are provided by residues 12–13 (FI), 32–35 (DALT), 58–59 (DI), 80–84 (FAAES), and Thr99. A substrate-binding site is contributed by Ser84. Thr133 contributes to the substrate binding site. Asp134 (proton donor) is an active-site residue. Catalysis depends on proton acceptor residues Glu135 and Tyr158. 158–162 (YSASK) contributes to the NAD(+) binding site. Asn187 contacts substrate. Asn188 provides a ligand contact to NAD(+). Substrate is bound by residues 197–198 (KL), 213–215 (PVY), Arg222, Asn257, and 289–293 (DRPGH).

It belongs to the NAD(P)-dependent epimerase/dehydratase family. dTDP-glucose dehydratase subfamily. As to quaternary structure, homodimer. It depends on NAD(+) as a cofactor.

The catalysed reaction is dTDP-alpha-D-glucose = dTDP-4-dehydro-6-deoxy-alpha-D-glucose + H2O. Its pathway is carbohydrate biosynthesis; dTDP-L-rhamnose biosynthesis. It functions in the pathway bacterial outer membrane biogenesis; LPS O-antigen biosynthesis. Catalyzes the dehydration of dTDP-D-glucose to form dTDP-6-deoxy-D-xylo-4-hexulose via a three-step process involving oxidation, dehydration and reduction. The protein is dTDP-glucose 4,6-dehydratase (rfbB) of Xanthomonas campestris pv. campestris (strain B100).